Here is a 369-residue protein sequence, read N- to C-terminus: Maltose/maltodextrin import ATP-binding protein MalK (369 aa).

Positions Val4–Ile234 constitute an ABC transporter domain. Residue Gly36 to Ser43 coordinates ATP.

The protein belongs to the ABC transporter superfamily. Maltooligosaccharide importer (TC 3.A.1.1.1) family. The complex is composed of two ATP-binding proteins (MalK), two transmembrane proteins (MalG and MalK) and a solute-binding protein (MalE).

It localises to the cell inner membrane. It carries out the reaction D-maltose(out) + ATP + H2O = D-maltose(in) + ADP + phosphate + H(+). In terms of biological role, part of the ABC transporter complex MalEFGK involved in maltose/maltodextrin import. Responsible for energy coupling to the transport system. The sequence is that of Maltose/maltodextrin import ATP-binding protein MalK from Yersinia pestis bv. Antiqua (strain Antiqua).